The following is a 140-amino-acid chain: MPTINQLVRKGREKKVVKSKSPALNKGYNSFKKEQTNVSSPQKRGVCTRVGTMTPKKPNSALRKYARVRLTNGIEVTAYIPGIGHNLQEHSVVLIRGGRVKDLPGVRYHIIRGALDAAGVANRMQGRSKYGAKKPKAAKK.

Residues 33–55 are disordered; it reads KEQTNVSSPQKRGVCTRVGTMTP.

Belongs to the universal ribosomal protein uS12 family. As to quaternary structure, part of the 30S ribosomal subunit. Contacts proteins S8 and S17. May interact with IF1 in the 30S initiation complex.

In terms of biological role, with S4 and S5 plays an important role in translational accuracy. Its function is as follows. Interacts with and stabilizes bases of the 16S rRNA that are involved in tRNA selection in the A site and with the mRNA backbone. Located at the interface of the 30S and 50S subunits, it traverses the body of the 30S subunit contacting proteins on the other side and probably holding the rRNA structure together. The combined cluster of proteins S8, S12 and S17 appears to hold together the shoulder and platform of the 30S subunit. The sequence is that of Small ribosomal subunit protein uS12 from Geobacillus kaustophilus (strain HTA426).